The chain runs to 441 residues: Membrane protein PB1A10.07c (441 aa).

The next 11 membrane-spanning stretches (helical) occupy residues 1–21 (MGAV…VVGI), 41–61 (VGAV…SWCM), 97–117 (LSFT…LCNT), 128–148 (GLWP…FFIP), 158–178 (IISV…LVDF), 206–226 (TVGM…FFCA), 235–255 (INTI…HPTI), 263–283 (GLAQ…SALA), 307–327 (VIGA…AASS), 364–384 (YNFI…ASLL), and 415–435 (IITS…PVFF).

Belongs to the TDE1 family.

The protein resides in the membrane. This chain is Membrane protein PB1A10.07c, found in Schizosaccharomyces pombe (strain 972 / ATCC 24843) (Fission yeast).